Reading from the N-terminus, the 231-residue chain is Phosphoribosylformylglycinamidine synthase subunit PurQ (231 aa).

The Glutamine amidotransferase type-1 domain occupies 3 to 231 (FGVLIFPGSN…ESMVGAMAKR (229 aa)). Cysteine 86 (nucleophile) is an active-site residue. Residues histidine 203 and glutamate 205 contribute to the active site.

Part of the FGAM synthase complex composed of 1 PurL, 1 PurQ and 2 PurS subunits.

Its subcellular location is the cytoplasm. The enzyme catalyses N(2)-formyl-N(1)-(5-phospho-beta-D-ribosyl)glycinamide + L-glutamine + ATP + H2O = 2-formamido-N(1)-(5-O-phospho-beta-D-ribosyl)acetamidine + L-glutamate + ADP + phosphate + H(+). It carries out the reaction L-glutamine + H2O = L-glutamate + NH4(+). It participates in purine metabolism; IMP biosynthesis via de novo pathway; 5-amino-1-(5-phospho-D-ribosyl)imidazole from N(2)-formyl-N(1)-(5-phospho-D-ribosyl)glycinamide: step 1/2. Its function is as follows. Part of the phosphoribosylformylglycinamidine synthase complex involved in the purines biosynthetic pathway. Catalyzes the ATP-dependent conversion of formylglycinamide ribonucleotide (FGAR) and glutamine to yield formylglycinamidine ribonucleotide (FGAM) and glutamate. The FGAM synthase complex is composed of three subunits. PurQ produces an ammonia molecule by converting glutamine to glutamate. PurL transfers the ammonia molecule to FGAR to form FGAM in an ATP-dependent manner. PurS interacts with PurQ and PurL and is thought to assist in the transfer of the ammonia molecule from PurQ to PurL. The sequence is that of Phosphoribosylformylglycinamidine synthase subunit PurQ from Koribacter versatilis (strain Ellin345).